We begin with the raw amino-acid sequence, 285 residues long: Glutamate racemase (285 aa).

Residues 28 to 29 (DS) and 60 to 61 (YG) contribute to the substrate site. Cysteine 92 (proton donor/acceptor) is an active-site residue. Residue 93–94 (NT) coordinates substrate. Cysteine 204 (proton donor/acceptor) is an active-site residue. 205 to 206 (TH) serves as a coordination point for substrate.

The protein belongs to the aspartate/glutamate racemases family.

It catalyses the reaction L-glutamate = D-glutamate. It participates in cell wall biogenesis; peptidoglycan biosynthesis. Functionally, provides the (R)-glutamate required for cell wall biosynthesis. The chain is Glutamate racemase from Escherichia coli O9:H4 (strain HS).